An 803-amino-acid chain; its full sequence is Nuclear factor of activated T-cells, cytoplasmic 1 (803 aa).

Residues P101–T106 form a calcineurin-binding region. Residues L109–E199 form a transactivation domain A (TAD-A) region. Positions P181–T195 are enriched in polar residues. A disordered region spans residues P181–D279. A run of 2 repeats spans residues S184–E200 and S214–E230. Residues S184–D279 form a 3 X SP repeats region. S214 and S218 each carry phosphoserine. Low complexity predominate over residues S214–S231. Position 226 is a phosphoserine; by PKA (S226). Residues K246–K248 carry the Nuclear localization signal motif. The stretch at S263 to D279 is repeat 3. S275 is subject to Phosphoserine; by PKA. A Nuclear export signal motif is present at residues S291–T302. The region spanning P389–A571 is the RHD domain. A DNA-binding region spans residues R418 to G425. Residues K661 to K663 carry the Nuclear localization signal motif. Residues L723 to G803 are disordered. Pro residues predominate over residues S778–L792. Over residues L793 to G803 the composition is skewed to low complexity.

In terms of assembly, member of the multicomponent NFATC transcription complex that consists of at least two components, a pre-existing cytoplasmic component NFATC2 and an inducible nuclear component NFATC1. Other members such as NFATC4, NFATC3 or members of the activating protein-1 family, MAF, GATA4 and Cbp/p300 can also bind the complex. NFATC proteins bind to DNA as monomers. Interacts with HOMER2 and HOMER3; this interaction may compete with calcineurin/PPP3CA-binding and hence prevent NFATC1 dephosphorylation and activation. Interacts with TLE6/GRG6. Phosphorylated by NFATC-kinase and GSK3B; phosphorylation induces NFATC1 nuclear exit and dephosphorylation by calcineurin promotes nuclear import. Phosphorylation by PKA and DYRK2 negatively modulates nuclear accumulation, and promotes subsequent phosphorylation by GSK3B or casein kinase 1.

The protein localises to the cytoplasm. The protein resides in the nucleus. In terms of biological role, plays a role in the inducible expression of cytokine genes in T-cells, especially in the induction of the IL-2 or IL-4 gene transcription. Also controls gene expression in embryonic cardiac cells. Could regulate not only the activation and proliferation but also the differentiation and programmed death of T-lymphocytes as well as lymphoid and non-lymphoid cells. Required for osteoclastogenesis and regulates many genes important for osteoclast differentiation and function. This is Nuclear factor of activated T-cells, cytoplasmic 1 from Bos taurus (Bovine).